Reading from the N-terminus, the 860-residue chain is Ribosome-releasing factor 2, mitochondrial (860 aa).

A tr-type G domain is found at 45-337 (DRTRNIGIIA…AVVNFLPSPL (293 aa)). GTP is bound by residues 54-61 (AHIDAGKT), 118-122 (DTPGH), and 172-175 (NKMD).

This sequence belongs to the TRAFAC class translation factor GTPase superfamily. Classic translation factor GTPase family. EF-G/EF-2 subfamily.

Its subcellular location is the mitochondrion. Its function is as follows. Mitochondrial GTPase that mediates the disassembly of ribosomes from messenger RNA at the termination of mitochondrial protein biosynthesis. Not involved in the GTP-dependent ribosomal translocation step during translation elongation. The sequence is that of Ribosome-releasing factor 2, mitochondrial from Debaryomyces hansenii (strain ATCC 36239 / CBS 767 / BCRC 21394 / JCM 1990 / NBRC 0083 / IGC 2968) (Yeast).